The following is a 56-amino-acid chain: Photosystem II reaction center protein K (56 aa).

Positions methionine 1–glycine 19 are excised as a propeptide. A helical transmembrane segment spans residues methionine 35–phenylalanine 55.

The protein belongs to the PsbK family. As to quaternary structure, PSII is composed of 1 copy each of membrane proteins PsbA, PsbB, PsbC, PsbD, PsbE, PsbF, PsbH, PsbI, PsbJ, PsbK, PsbL, PsbM, PsbT, PsbX, PsbY, PsbZ, Psb30/Ycf12, at least 3 peripheral proteins of the oxygen-evolving complex and a large number of cofactors. It forms dimeric complexes.

Its subcellular location is the plastid. It localises to the chloroplast thylakoid membrane. One of the components of the core complex of photosystem II (PSII). PSII is a light-driven water:plastoquinone oxidoreductase that uses light energy to abstract electrons from H(2)O, generating O(2) and a proton gradient subsequently used for ATP formation. It consists of a core antenna complex that captures photons, and an electron transfer chain that converts photonic excitation into a charge separation. In Pinus thunbergii (Japanese black pine), this protein is Photosystem II reaction center protein K.